Reading from the N-terminus, the 266-residue chain is Thymidylate synthase (266 aa).

DUMP is bound by residues Arg-20 and 129-130 (RR). The active-site Nucleophile is Cys-149. DUMP is bound by residues 169-172 (RSCD), Asn-180, and 210-212 (HVY). Asp-172 lines the (6R)-5,10-methylene-5,6,7,8-tetrahydrofolate pocket. Residue Ala-265 coordinates (6R)-5,10-methylene-5,6,7,8-tetrahydrofolate.

The protein belongs to the thymidylate synthase family. Bacterial-type ThyA subfamily. As to quaternary structure, homodimer.

Its subcellular location is the cytoplasm. The enzyme catalyses dUMP + (6R)-5,10-methylene-5,6,7,8-tetrahydrofolate = 7,8-dihydrofolate + dTMP. It participates in pyrimidine metabolism; dTTP biosynthesis. In terms of biological role, catalyzes the reductive methylation of 2'-deoxyuridine-5'-monophosphate (dUMP) to 2'-deoxythymidine-5'-monophosphate (dTMP) while utilizing 5,10-methylenetetrahydrofolate (mTHF) as the methyl donor and reductant in the reaction, yielding dihydrofolate (DHF) as a by-product. This enzymatic reaction provides an intracellular de novo source of dTMP, an essential precursor for DNA biosynthesis. The sequence is that of Thymidylate synthase from Bifidobacterium longum (strain NCC 2705).